The primary structure comprises 150 residues: 1,4-dihydroxy-2-naphthoyl-CoA hydrolase (150 aa).

Aspartate 19 is an active-site residue.

This sequence belongs to the 4-hydroxybenzoyl-CoA thioesterase family. DHNA-CoA hydrolase subfamily.

It carries out the reaction 1,4-dihydroxy-2-naphthoyl-CoA + H2O = 1,4-dihydroxy-2-naphthoate + CoA + H(+). It functions in the pathway cofactor biosynthesis; phylloquinone biosynthesis. Its pathway is quinol/quinone metabolism; 1,4-dihydroxy-2-naphthoate biosynthesis; 1,4-dihydroxy-2-naphthoate from chorismate: step 7/7. Its function is as follows. Catalyzes the hydrolysis of 1,4-dihydroxy-2-naphthoyl-CoA (DHNA-CoA) to 1,4-dihydroxy-2-naphthoate (DHNA), a reaction involved in phylloquinone (vitamin K1) biosynthesis. The sequence is that of 1,4-dihydroxy-2-naphthoyl-CoA hydrolase from Prochlorococcus marinus subsp. pastoris (strain CCMP1986 / NIES-2087 / MED4).